Consider the following 349-residue polypeptide: UDP-N-acetylenolpyruvoylglucosamine reductase (349 aa).

The region spanning 25–197 (GIAARARFAA…VAVTFRLPKQ (173 aa)) is the FAD-binding PCMH-type domain. The active site involves arginine 173. The active-site Proton donor is serine 249. Glutamate 345 is a catalytic residue.

This sequence belongs to the MurB family. It depends on FAD as a cofactor.

It is found in the cytoplasm. The catalysed reaction is UDP-N-acetyl-alpha-D-muramate + NADP(+) = UDP-N-acetyl-3-O-(1-carboxyvinyl)-alpha-D-glucosamine + NADPH + H(+). The protein operates within cell wall biogenesis; peptidoglycan biosynthesis. Functionally, cell wall formation. This Burkholderia cenocepacia (strain HI2424) protein is UDP-N-acetylenolpyruvoylglucosamine reductase.